Consider the following 1714-residue polypeptide: Protein ESSENTIAL FOR POTEXVIRUS ACCUMULATION 1 (1714 aa).

2 disordered regions span residues 1-296 (MANS…PPHL) and 358-511 (IVSS…SKGE). S39 is subject to Phosphoserine. A compositionally biased stretch (polar residues) spans 58–75 (DPNQYGNHSDVVRTTGNG). Composition is skewed to basic and acidic residues over residues 96-136 (ESGR…DRWD) and 143-203 (GEQR…REKG). Composition is skewed to polar residues over residues 230-244 (HNQS…SFSH) and 268-278 (IFTSAPNQSHP). 2 stretches are compositionally biased toward basic and acidic residues: residues 389–422 (GSRE…EASH) and 430–441 (RGNEAPVRELKE). Residues 444 to 463 (MQGNAHVQSASPWRQSSGGE) are compositionally biased toward polar residues. Positions 464–483 (RSNRNSHDWNDPSADSRLKS) are enriched in basic and acidic residues. The region spanning 546 to 597 (ELSLYYKDPQGLIQGPFSGSDIIGWFEAGYFGIDLLVRLASAPNDSPFSLLG) is the GYF domain. Disordered regions lie at residues 728-753 (ESAN…PSSD), 1092-1205 (VKNN…KPAP), and 1437-1566 (QEKM…GKKE). Over residues 737–753 (ENVSENAQQPTRSPSSD) the composition is skewed to polar residues. Basic and acidic residues predominate over residues 1142-1162 (SEIKGKTKKSADTLIDNDTHL). Polar residues predominate over residues 1163–1180 (IKSSTATASNTSQMSSEV). A compositionally biased stretch (low complexity) spans 1467–1488 (ASWSRSASSPSQAVSQSSSQSK). Residues 1515 to 1544 (LTSQNSWGTKNTPGKVNAGTSLNRQKSVSM) are compositionally biased toward polar residues.

As to quaternary structure, associates with eIF4E initiation factors and the ribosome complex, thus likely contributing to the proper translation of target proteins. Interacts directly with RPL18B and eIF4E1. Binds to SMG7. Quickly phosphorylated at Ser-39 after treatment of seedlings with the pathogen-associated molecular pattern (PAMP) flg22. Expressed in all tissues, mostly in flowers, leaves and stems, and, to a lower extent, in roots (at protein level).

It is found in the cytoplasm. The protein resides in the cytosol. The protein localises to the P-body. Translational repressor involved in the negative regulation of immune receptor accumulation via the inhibition of nucleotide-binding leucine-rich repeat (NLR) receptor mediated defense. Represses NLR protein accumulation (e.g. SNC1, RPS4, RPM1 and RPS2). Together with SMG7, helps to restrict effector-triggered immunity (ETI) cell death induction during pathogen infection in a salicylic acid- (SA) and reactive oxygen species- (ROS) independent manner. Required for pathogen-associated molecular pattern (PAMP)-induced suppression of necrotrophic fungal (e.g. F.moniliforme) pathogen-derived mycotoxin-triggered (e.g. fumonisin B1) cell death. In terms of biological role, (Microbial infection) Required for early steps of plantago asiatica mosaic virus (PlAMV, genus Potexvirus) infection. Facilitates pathogenic growth of avirulent hemi-biotrophic bacteria P.syringae pv. tomato (Pst) DC3000 (e.g. AvrRps4 and AvrRpm1) and of the compatible oomycete H.arabidopsidis Noco2. In Arabidopsis thaliana (Mouse-ear cress), this protein is Protein ESSENTIAL FOR POTEXVIRUS ACCUMULATION 1.